The sequence spans 622 residues: MHPEVSEPQADGATEPSLEESAGDHGRAGPGVRKEEINETKETCVGPSTTSCQSQKQQSGDSRLDCRSGYARNDRDDRGPRMTKEFLQKLCKQHKLYITPALNDTLYLHFKGFDRIENLEEYTGLRCLWLECNGIQRIENLQAQSELRCLFLQVNLLHKIENLEPLQKLDALNLSNNYIKTIENLSCLPVLNTLQMAHNRLETVADIQHLRECLRLCVLDLSHNMLSDPEILSVLESMPCLRVLNLMGNPVTKHIPNYRRTVTVRLKQLTYLDDRPVFPKDRACAEAWARGGYAAEKEERLQWESREHKKITDSLEALAMIKRRAEERKKARDKGETPLPDSEESSSTSPEAQDKPPLGETQQKIEVFVEESFKVKDELFPEKPGGEEELAVVEDRTMEEPDLPGSLAQSQTLLVATAEESTSSVAATDGTGTEDTEAIALETKERLFIDDLPDLEDVDGMDMSMEDQTKEMGIPKIQVISSLSDDSDPELNDSPLPMLEHTPTGSTGVLSNIFAVCKDSSKAVRVPLTDICEPRATTELETQGQVFSTTPPRPLIQELEEDGRGENESKPSLPAQSSEDGDSQLPEATLLGDRAENEAQSSLDLGKPSPRASLEDIEFGLD.

A disordered region spans residues 1–80; sequence MHPEVSEPQA…ARNDRDDRGP (80 aa). Positions 22-42 are enriched in basic and acidic residues; sequence AGDHGRAGPGVRKEEINETKE. Residues 48–59 show a composition bias toward low complexity; that stretch reads STTSCQSQKQQS. Basic and acidic residues predominate over residues 62–80; the sequence is SRLDCRSGYARNDRDDRGP. LRR repeat units lie at residues 101–123, 124–145, 146–167, 168–189, 190–211, and 215–236; these read ALNDTLYLHFKGFDRIENLEEYT, GLRCLWLECNGIQRIENLQAQS, ELRCLFLQVNLLHKIENLEPLQ, KLDALNLSNNYIKTIENLSCLP, VLNTLQMAHNRLETVADIQHLR, and RLCVLDLSHNMLSDPEILSVLE. Residues 249–288 form the LRRCT domain; it reads NPVTKHIPNYRRTVTVRLKQLTYLDDRPVFPKDRACAEAW. Residues 326–336 show a composition bias toward basic and acidic residues; it reads EERKKARDKGE. A disordered region spans residues 326-360; the sequence is EERKKARDKGETPLPDSEESSSTSPEAQDKPPLGE. Residues 337–351 are compositionally biased toward low complexity; the sequence is TPLPDSEESSSTSPE. S349, S464, and S487 each carry phosphoserine. Disordered regions lie at residues 481–503 and 540–622; these read SSLSDDSDPELNDSPLPMLEHTP and LETQ…FGLD. Over residues 540–550 the composition is skewed to polar residues; the sequence is LETQGQVFSTT.

Belongs to the DNAAF1 family.

It localises to the cell projection. It is found in the cilium. Its function is as follows. Cilium-specific protein required for the stability of the ciliary architecture. Plays a role in cytoplasmic preassembly of dynein arms. Involved in regulation of microtubule-based cilia and actin-based brush border microvilli. In Peromyscus leucopus (White-footed mouse), this protein is Dynein axonemal assembly factor 1 (Dnaaf1).